The primary structure comprises 212 residues: uncharacterized protein (212 aa).

This is an uncharacterized protein from Mycobacterium tuberculosis (strain ATCC 25618 / H37Rv).